The sequence spans 585 residues: tRNA 5-methylaminomethyl-2-thiouridine biosynthesis bifunctional protein MnmC (585 aa).

The segment at 1 to 236 (MTPDGLYCDP…KRERLEAVWP (236 aa)) is tRNA (mnm(5)s(2)U34)-methyltransferase. Residues 254-585 (LGAGIAGASL…SRRAGQGAAG (332 aa)) are FAD-dependent cmnm(5)s(2)U34 oxidoreductase. The interval 564–585 (EAMAPGRFAERRSRRAGQGAAG) is disordered.

This sequence in the N-terminal section; belongs to the methyltransferase superfamily. tRNA (mnm(5)s(2)U34)-methyltransferase family. It in the C-terminal section; belongs to the DAO family. FAD serves as cofactor.

The protein resides in the cytoplasm. It carries out the reaction 5-aminomethyl-2-thiouridine(34) in tRNA + S-adenosyl-L-methionine = 5-methylaminomethyl-2-thiouridine(34) in tRNA + S-adenosyl-L-homocysteine + H(+). In terms of biological role, catalyzes the last two steps in the biosynthesis of 5-methylaminomethyl-2-thiouridine (mnm(5)s(2)U) at the wobble position (U34) in tRNA. Catalyzes the FAD-dependent demodification of cmnm(5)s(2)U34 to nm(5)s(2)U34, followed by the transfer of a methyl group from S-adenosyl-L-methionine to nm(5)s(2)U34, to form mnm(5)s(2)U34. The polypeptide is tRNA 5-methylaminomethyl-2-thiouridine biosynthesis bifunctional protein MnmC (Maricaulis maris (strain MCS10) (Caulobacter maris)).